The chain runs to 184 residues: Isopentenyl-diphosphate Delta-isomerase (184 aa).

Mn(2+) is bound by residues histidine 26 and histidine 33. In terms of domain architecture, Nudix hydrolase spans 31 to 165; it reads PLHLAFSCYL…PSAFSPWLGL (135 aa). Cysteine 68 is a catalytic residue. Histidine 70 lines the Mn(2+) pocket. Mg(2+) is bound at residue glutamate 88. Glutamate 115 and glutamate 117 together coordinate Mn(2+). Glutamate 117 is a catalytic residue.

The protein belongs to the IPP isomerase type 1 family. The cofactor is Mg(2+). Mn(2+) serves as cofactor.

The protein localises to the cytoplasm. The enzyme catalyses isopentenyl diphosphate = dimethylallyl diphosphate. Its pathway is isoprenoid biosynthesis; dimethylallyl diphosphate biosynthesis; dimethylallyl diphosphate from isopentenyl diphosphate: step 1/1. In terms of biological role, catalyzes the 1,3-allylic rearrangement of the homoallylic substrate isopentenyl (IPP) to its highly electrophilic allylic isomer, dimethylallyl diphosphate (DMAPP). The protein is Isopentenyl-diphosphate Delta-isomerase of Paenarthrobacter aurescens (strain TC1).